Consider the following 115-residue polypeptide: Cell division topological specificity factor (115 aa).

The disordered stretch occupies residues 93–115; sequence QLKEPKNQSELDSPETEGTDQKS. The span at 104–115 shows a compositional bias: acidic residues; sequence DSPETEGTDQKS.

This sequence belongs to the MinE family.

Functionally, prevents the cell division inhibition by proteins MinC and MinD at internal division sites while permitting inhibition at polar sites. This ensures cell division at the proper site by restricting the formation of a division septum at the midpoint of the long axis of the cell. This chain is Cell division topological specificity factor, found in Prochlorococcus marinus (strain NATL1A).